The primary structure comprises 353 residues: Ferredoxin--NADP reductase (353 aa).

T25, E44, Q52, Y57, V97, F132, D298, and S339 together coordinate FAD.

It belongs to the ferredoxin--NADP reductase type 2 family. In terms of assembly, homodimer. FAD serves as cofactor.

The enzyme catalyses 2 reduced [2Fe-2S]-[ferredoxin] + NADP(+) + H(+) = 2 oxidized [2Fe-2S]-[ferredoxin] + NADPH. This is Ferredoxin--NADP reductase from Chlorobium phaeovibrioides (strain DSM 265 / 1930) (Prosthecochloris vibrioformis (strain DSM 265)).